A 314-amino-acid polypeptide reads, in one-letter code: Olfactory receptor 1E16 (314 aa).

Residues 1–29 (MTERNKTVISQFLLLGLPIPPEHQQLFYA) are Extracellular-facing. Asparagine 5 carries an N-linked (GlcNAc...) asparagine glycan. A helical membrane pass occupies residues 30 to 50 (LFLVMYLTTVLGNLIIIILII). The Cytoplasmic portion of the chain corresponds to 51–57 (LDSHLHT). Residues 58–78 (PMYLFLSNLSFSDLCFSSVTM) traverse the membrane as a helical segment. Over 79-97 (PKLLQNMQSQVPSIPYAGC) the chain is Extracellular. A disulfide bridge links cysteine 97 with cysteine 179. The helical transmembrane segment at 98–118 (LAQIYFFLFFGDLGNFLLVAM) threads the bilayer. At 119 to 143 (AYDRYVAICYPLHYTTIMSPRLCVS) the chain is on the cytoplasmic side. The helical transmembrane segment at 144 to 164 (LVVLSWVLTTFHAMLHTLLMA) threads the bilayer. The Extracellular portion of the chain corresponds to 165–196 (RLSFCEDNVIPHYFCDMSALLKLACSDTRVNE). Residues 197–217 (VVIFIVASIFLVLPFALITMS) traverse the membrane as a helical segment. Residues 218–239 (YVRIVSSILKVPSSQGIYKAFS) lie on the Cytoplasmic side of the membrane. A helical membrane pass occupies residues 240–260 (TCGSHLSVVSLFYGTVIGLYL). Residues 261–271 (SPSSNNSTVKD) lie on the Extracellular side of the membrane. 2 N-linked (GlcNAc...) asparagine glycosylation sites follow: asparagine 265 and asparagine 266. Residues 272–292 (TVMSLMYTVVTPMLNPFIYSL) traverse the membrane as a helical segment. At 293-314 (RNRDIKGALERVFCKRKIQLNL) the chain is on the cytoplasmic side.

It belongs to the G-protein coupled receptor 1 family. In terms of tissue distribution, olfactory epithelium.

It is found in the cell membrane. Its function is as follows. Odorant receptor. Activated by a lily-derived aldehyde as well as other odorants. May signal through an inositol 1,4,5-trisphosphate (IP3) second messenger system. This chain is Olfactory receptor 1E16, found in Mus musculus (Mouse).